The following is a 213-amino-acid chain: tRNA (guanine-N(7)-)-methyltransferase (213 aa).

S-adenosyl-L-methionine-binding residues include D44, E69, N96, and D119. Residue D119 is part of the active site. The substrate site is built by K123 and D155.

Belongs to the class I-like SAM-binding methyltransferase superfamily. TrmB family.

It carries out the reaction guanosine(46) in tRNA + S-adenosyl-L-methionine = N(7)-methylguanosine(46) in tRNA + S-adenosyl-L-homocysteine. The protein operates within tRNA modification; N(7)-methylguanine-tRNA biosynthesis. Its function is as follows. Catalyzes the formation of N(7)-methylguanine at position 46 (m7G46) in tRNA. In Thermosynechococcus vestitus (strain NIES-2133 / IAM M-273 / BP-1), this protein is tRNA (guanine-N(7)-)-methyltransferase.